The sequence spans 270 residues: MKQLNVHLISDYGVDALIAVSRASLERFEHLVSAEHHLWPSTTSIEKLQQVFLHIERSSFVLYSIRERIIRDTLKDFCQKRKIPCIAVLSRVIRELSSYLGIEPIHTSKEEYQTFNEDYFARIDAMNYVLTHDDGQNTWDLDEANIIIVGPSRTSKSPTSVYLSHLGYRVANIPFVNNIPLPAKLTTLENILIVGLTINPDRLIEIRKARLSISQNYDNPVYADREQILEELTNARKTFIKNNWPVIDVTHRSVEEIAAAIMKEYTMRKY.

150–157 (GPSRTSKS) is a binding site for ADP.

This sequence belongs to the pyruvate, phosphate/water dikinase regulatory protein family. PDRP subfamily.

It carries out the reaction N(tele)-phospho-L-histidyl/L-threonyl-[pyruvate, phosphate dikinase] + ADP = N(tele)-phospho-L-histidyl/O-phospho-L-threonyl-[pyruvate, phosphate dikinase] + AMP + H(+). The catalysed reaction is N(tele)-phospho-L-histidyl/O-phospho-L-threonyl-[pyruvate, phosphate dikinase] + phosphate + H(+) = N(tele)-phospho-L-histidyl/L-threonyl-[pyruvate, phosphate dikinase] + diphosphate. Bifunctional serine/threonine kinase and phosphorylase involved in the regulation of the pyruvate, phosphate dikinase (PPDK) by catalyzing its phosphorylation/dephosphorylation. The protein is Putative pyruvate, phosphate dikinase regulatory protein of Neorickettsia sennetsu (strain ATCC VR-367 / Miyayama) (Ehrlichia sennetsu).